Reading from the N-terminus, the 210-residue chain is MELQLAIDLLNKEEAAKLAQKVEEYVDIVEIGTPIVINEGLPAVQHLNENINNAKVLADLKIMDAADYEVSQAVKYGADIVTILGVAEDASIKAAVEEAHKHGKALLVDMIAVQNLEQRAKELDEMGADYIAVHTGYDLQAEGKSPLDSLRTVKSVIKNSKVAVAGGIKPDTIKDIVAEDPDLVIVGGGIANADDPVEAAKQCRVAIEGK.

It belongs to the HPS/KGPDC family. HPS subfamily.

It catalyses the reaction D-ribulose 5-phosphate + formaldehyde = D-arabino-hex-3-ulose 6-phosphate. Its pathway is one-carbon metabolism; formaldehyde assimilation via RuMP pathway; D-fructose 6-phosphate from D-ribulose 5-phosphate and formaldehyde: step 1/2. Catalyzes the condensation of ribulose 5-phosphate with formaldehyde to form 3-hexulose 6-phosphate. In Staphylococcus epidermidis (strain ATCC 12228 / FDA PCI 1200), this protein is 3-hexulose-6-phosphate synthase.